The chain runs to 470 residues: Poly(A) polymerase catalytic subunit (470 aa).

Active-site residues include Asp-192 and Asp-194.

Belongs to the poxviridae poly(A) polymerase catalytic subunit family. As to quaternary structure, heterodimer of a large (catalytic) subunit and a small (regulatory) subunit.

It carries out the reaction RNA(n) + ATP = RNA(n)-3'-adenine ribonucleotide + diphosphate. Functionally, polymerase that creates the 3'-poly(A) tail of mRNA's. The sequence is that of Poly(A) polymerase catalytic subunit (PAPL) from Erythrocebus patas (Red guenon).